Consider the following 539-residue polypeptide: 2-isopropylmalate synthase (539 aa).

The Pyruvate carboxyltransferase domain occupies 8-269 (VLIFDTTLRD…YFNPFFGRPP (262 aa)). Mn(2+) contacts are provided by D17, H208, H210, and N244. Positions 408–539 (QLKLVQVSCG…DLAKVDKKGI (132 aa)) are regulatory domain.

It belongs to the alpha-IPM synthase/homocitrate synthase family. LeuA type 1 subfamily. Homodimer. The cofactor is Mn(2+).

It localises to the cytoplasm. The enzyme catalyses 3-methyl-2-oxobutanoate + acetyl-CoA + H2O = (2S)-2-isopropylmalate + CoA + H(+). It functions in the pathway amino-acid biosynthesis; L-leucine biosynthesis; L-leucine from 3-methyl-2-oxobutanoate: step 1/4. Catalyzes the condensation of the acetyl group of acetyl-CoA with 3-methyl-2-oxobutanoate (2-ketoisovalerate) to form 3-carboxy-3-hydroxy-4-methylpentanoate (2-isopropylmalate). This Prochlorococcus marinus (strain NATL1A) protein is 2-isopropylmalate synthase.